The following is a 400-amino-acid chain: Large envelope protein (400 aa).

Methionine 1 carries the N-acetylmethionine modification. Glycine 2 carries the N-myristoyl glycine; by host lipid modification. The interval 2-119 (GGWSSKPRKG…PPLRDTHPQA (118 aa)) is pre-S1. Positions 2–174 (GGWSSKPRKG…LSKTGDPVPN (173 aa)) are pre-S. Over 2–181 (GGWSSKPRKG…VPNMENISSG (180 aa)) the chain is Virion surface; in external conformation. The Intravirion; in internal conformation portion of the chain corresponds to 2–253 (GGWSSKPRKG…PGYRWMCLRR (252 aa)). N-linked (GlcNAc...) asparagine glycosylation is present at tryptophan 4. Disordered regions lie at residues 29 to 50 (QLDPAFKANSDNPDWDLNPHKD) and 85 to 118 (LTTVPAAPPPASTSRQSGRQPTPLSPPLRDTHPQ). The span at 96-106 (STSRQSGRQPT) shows a compositional bias: polar residues. Residues 120-174 (MQWNSTTFHQTLQDPRVRALYFPAGGSSSGTVSPAQNTVSAISSTLSKTGDPVPN) form a pre-S2 region. A helical transmembrane segment spans residues 182–202 (LLGPLLVLQAGFFLLTKILTI). Topologically, residues 203 to 253 (PQSLDSWWTSLNFLGQTPVCLGQNSQSQISSHSLTCCPPICPGYRWMCLRR) are intravirion; in external conformation. Residues 254–274 (FIIFLCILLLCLIFLLVLLDC) traverse the membrane as a helical segment. Residues 275-348 (QGMLPVCPLI…WASVRFSWLS (74 aa)) are Virion surface-facing. Asparagine 320 carries an N-linked (GlcNAc...) asparagine; by host glycan. The chain crosses the membrane as a helical span at residues 349–369 (LLVPFVQWFVGLSPTVWLSVI). Over 370 to 375 (WMMWFW) the chain is Intravirion. A helical membrane pass occupies residues 376 to 398 (GPSLCNILSPFMPLLPIFFCLWV). The Virion surface portion of the chain corresponds to 399 to 400 (YI).

This sequence belongs to the orthohepadnavirus major surface antigen family. Interacts (via its myristoylated pre-S1 region) with the host SLC10A1/NTCP; this interaction is essential for viral entry. As to quaternary structure, in its internal form (Li-HBsAg), interacts with the capsid protein and with the isoform S. Interacts with host chaperone CANX. In terms of assembly, associates with host chaperone CANX through its pre-S2 N glycan; this association may be essential for isoform M proper secretion. Interacts with isoform L. Interacts with the antigens of satellite virus HDV (HDVAgs); this interaction is required for encapsidation of HDV genomic RNA. Isoform M is N-terminally acetylated by host at a ratio of 90%, and N-glycosylated by host at the pre-S2 region. In terms of processing, myristoylated; this modification is essential for its interaction with the host protein SLC10A1/NTCP.

It localises to the virion membrane. Functionally, the large envelope protein exists in two topological conformations, one which is termed 'external' or Le-HBsAg and the other 'internal' or Li-HBsAg. In its external conformation the protein attaches the virus to cell receptors and thereby initiating infection. This interaction determines the species specificity and liver tropism. This attachment induces virion internalization predominantly through caveolin-mediated endocytosis. The large envelope protein also assures fusion between virion membrane and endosomal membrane. In its internal conformation the protein plays a role in virion morphogenesis and mediates the contact with the nucleocapsid like a matrix protein. The middle envelope protein plays an important role in the budding of the virion. It is involved in the induction of budding in a nucleocapsid independent way. In this process the majority of envelope proteins bud to form subviral lipoprotein particles of 22 nm of diameter that do not contain a nucleocapsid. This is Large envelope protein from Homo sapiens (Human).